The sequence spans 513 residues: ATP synthase subunit alpha (513 aa).

169–176 contributes to the ATP binding site; that stretch reads GDRQIGKT.

This sequence belongs to the ATPase alpha/beta chains family. In terms of assembly, F-type ATPases have 2 components, CF(1) - the catalytic core - and CF(0) - the membrane proton channel. CF(1) has five subunits: alpha(3), beta(3), gamma(1), delta(1), epsilon(1). CF(0) has three main subunits: a(1), b(2) and c(9-12). The alpha and beta chains form an alternating ring which encloses part of the gamma chain. CF(1) is attached to CF(0) by a central stalk formed by the gamma and epsilon chains, while a peripheral stalk is formed by the delta and b chains.

The protein localises to the cell inner membrane. The catalysed reaction is ATP + H2O + 4 H(+)(in) = ADP + phosphate + 5 H(+)(out). Produces ATP from ADP in the presence of a proton gradient across the membrane. The alpha chain is a regulatory subunit. The chain is ATP synthase subunit alpha from Francisella tularensis subsp. holarctica (strain OSU18).